A 132-amino-acid polypeptide reads, in one-letter code: Small ribosomal subunit protein uS11 (132 aa).

Residues 1–24 (MAAQKQAARKPRRRDRKSVPVGQA) form a disordered region. Residues 7–16 (AARKPRRRDR) are compositionally biased toward basic residues.

This sequence belongs to the universal ribosomal protein uS11 family. In terms of assembly, part of the 30S ribosomal subunit. Interacts with proteins S7 and S18. Binds to IF-3.

Its function is as follows. Located on the platform of the 30S subunit, it bridges several disparate RNA helices of the 16S rRNA. Forms part of the Shine-Dalgarno cleft in the 70S ribosome. The chain is Small ribosomal subunit protein uS11 from Bifidobacterium adolescentis (strain ATCC 15703 / DSM 20083 / NCTC 11814 / E194a).